A 299-amino-acid polypeptide reads, in one-letter code: GTP cyclohydrolase FolE2 (299 aa).

Belongs to the GTP cyclohydrolase IV family.

The enzyme catalyses GTP + H2O = 7,8-dihydroneopterin 3'-triphosphate + formate + H(+). It participates in cofactor biosynthesis; 7,8-dihydroneopterin triphosphate biosynthesis; 7,8-dihydroneopterin triphosphate from GTP: step 1/1. Its function is as follows. Converts GTP to 7,8-dihydroneopterin triphosphate. The sequence is that of GTP cyclohydrolase FolE2 from Klebsiella pneumoniae.